We begin with the raw amino-acid sequence, 115 residues long: uncharacterized protein (115 aa).

A disordered region spans residues 9 to 30 (EGLRERGASGKNEQKKKKKEKI).

This is an uncharacterized protein from Saccharomyces cerevisiae (strain ATCC 204508 / S288c) (Baker's yeast).